The sequence spans 311 residues: Probable inactive peptidyl-prolyl cis-trans isomerase-like 6 (311 aa).

The region spanning 145 to 308 (FLDICIDSSP…HMCRITDSGD (164 aa)) is the PPIase cyclophilin-type domain.

Belongs to the cyclophilin-type PPIase family.

Its function is as follows. Probable inactive PPIase with no peptidyl-prolyl cis-trans isomerase activity. This chain is Probable inactive peptidyl-prolyl cis-trans isomerase-like 6, found in Homo sapiens (Human).